Here is a 101-residue protein sequence, read N- to C-terminus: Small ribosomal subunit protein bS6 (101 aa).

Belongs to the bacterial ribosomal protein bS6 family.

In terms of biological role, binds together with bS18 to 16S ribosomal RNA. The polypeptide is Small ribosomal subunit protein bS6 (Arthrobacter sp. (strain FB24)).